Consider the following 625-residue polypeptide: MGQTANSCQKMLDGRPADVSGMVVNDPCLMNIPTSFYHSTNQELDLSNKTFKREVGGPFSVMMENKMGKPHLLETDQQNFFRDSKPINEVHSVKGERENSGESEEEEDDDDDDDDEDDEEGEEDEDEVNYKREQIIVEVNLNNQTLNVSKGDKGVAQDSSHIKTSSDDEEGDSGEDDQDSHEDEENNPLPLDGQTNMQHGNQDQKTENSDMVGGDGTIPANSTKELGKGGEAPKRKKKTPKEPKSPSDKAKSEEKETLTCDKCPRVFNTRWYLEKHMNVTHRRMQICDKCGKKFVLESELSLHLQTDCEKNIQCITCNKTFKKLWSLHEHIKIVHGYAEKKFSCEICEKKFYTMAHVRKHLVAHTKDMPFTCETCGKSFKRSMSLKVHSLQHSGEKPFRCENCDERFQYKYQLRSHMSIHIGHKQFMCQWCGKDFNMKQYFDEHMKTHTGEKPFICEICGKSFTSRPNMKRHRRTHTGEKPYPCDVCGMRFRFSNMLKAHKEKCFRVTSPVGVPPALQIALGNPTLSNPSQGVTHLPTAHVPPPSPTPPLNLNVLNTLPPRPIPHPFSHLHLHPHSHTHHLAVPPVPHLPPPPALFKSEALNHRGHNDDSFLRHLAEKTSASQHH.

The tract at residues Phe-80–Lys-255 is disordered. The segment covering Arg-82–Ser-100 has biased composition (basic and acidic residues). Positions Gly-101–Glu-127 are enriched in acidic residues. The segment covering Lys-150–Ser-166 has biased composition (basic and acidic residues). The segment covering Asp-167 to Asn-186 has biased composition (acidic residues). A compositionally biased stretch (basic and acidic residues) spans Pro-240–Lys-255. The C2H2-type 1 zinc finger occupies Leu-258 to His-281. The segment at Gln-285–Asp-307 adopts a C2H2-type 2; degenerate zinc-finger fold. 6 C2H2-type zinc fingers span residues Ile-312–His-335, Phe-342–His-364, Phe-370–His-392, Phe-398–His-420, Phe-426–His-448, and Phe-454–His-476. The C2H2-type 9; degenerate zinc-finger motif lies at Tyr-482–Phe-505.

This sequence belongs to the krueppel C2H2-type zinc-finger protein family.

The protein resides in the nucleus. In terms of biological role, may be involved in transcriptional regulation. This is Zinc finger protein 652-A (znf652-a) from Xenopus laevis (African clawed frog).